The following is a 447-amino-acid chain: Putative branched-chain amino acid carrier protein SSP1343 (447 aa).

The next 12 helical transmembrane spans lie at 6–26, 40–60, 74–94, 116–136, 143–163, 192–212, 228–248, 289–309, 324–344, 349–369, 381–401, and 416–436; these read WIIG…IFPP, ILAF…VGAL, PKFS…LFAI, LALF…CINP, IGSL…VKGF, GYLT…VNAV, LMAG…LGYI, LLGI…VVAV, IYVI…LNSV, VPVL…ILLA, IPVA…QGWI, and LEWF…AAMV.

Belongs to the branched chain amino acid transporter family.

The protein resides in the cell membrane. In terms of biological role, component of the transport system for branched-chain amino acids (leucine, isoleucine and valine), which is coupled to a proton motive force. In Staphylococcus saprophyticus subsp. saprophyticus (strain ATCC 15305 / DSM 20229 / NCIMB 8711 / NCTC 7292 / S-41), this protein is Putative branched-chain amino acid carrier protein SSP1343.